The primary structure comprises 461 residues: Photosystem II CP43 reaction center protein (461 aa).

Residues methionine 1–glutamate 2 constitute a propeptide that is removed on maturation. Threonine 3 is modified (N-acetylthreonine). Threonine 3 carries the phosphothreonine modification. The next 5 membrane-spanning stretches (helical) occupy residues leucine 57–alanine 81, leucine 122–asparagine 143, lysine 166–threonine 188, lysine 243–serine 263, and tryptophan 279–serine 300. Residue glutamate 355 coordinates [CaMn4O5] cluster. A helical membrane pass occupies residues arginine 435–proline 459.

It belongs to the PsbB/PsbC family. PsbC subfamily. As to quaternary structure, PSII is composed of 1 copy each of membrane proteins PsbA, PsbB, PsbC, PsbD, PsbE, PsbF, PsbH, PsbI, PsbJ, PsbK, PsbL, PsbM, PsbT, PsbX, PsbY, PsbZ, Psb30/Ycf12, at least 3 peripheral proteins of the oxygen-evolving complex and a large number of cofactors. It forms dimeric complexes. The cofactor is Binds multiple chlorophylls and provides some of the ligands for the Ca-4Mn-5O cluster of the oxygen-evolving complex. It may also provide a ligand for a Cl- that is required for oxygen evolution. PSII binds additional chlorophylls, carotenoids and specific lipids..

Its subcellular location is the plastid. It is found in the chloroplast thylakoid membrane. One of the components of the core complex of photosystem II (PSII). It binds chlorophyll and helps catalyze the primary light-induced photochemical processes of PSII. PSII is a light-driven water:plastoquinone oxidoreductase, using light energy to abstract electrons from H(2)O, generating O(2) and a proton gradient subsequently used for ATP formation. This chain is Photosystem II CP43 reaction center protein, found in Tupiella akineta (Green alga).